Reading from the N-terminus, the 365-residue chain is Alanine racemase (365 aa).

Residue Lys36 is the Proton acceptor; specific for D-alanine of the active site. An N6-(pyridoxal phosphate)lysine modification is found at Lys36. Arg132 is a substrate binding site. The active-site Proton acceptor; specific for L-alanine is Tyr257. Met305 is a binding site for substrate.

It belongs to the alanine racemase family. Pyridoxal 5'-phosphate is required as a cofactor.

The catalysed reaction is L-alanine = D-alanine. The protein operates within amino-acid biosynthesis; D-alanine biosynthesis; D-alanine from L-alanine: step 1/1. In terms of biological role, catalyzes the interconversion of L-alanine and D-alanine. May also act on other amino acids. This is Alanine racemase (alr) from Xylella fastidiosa (strain Temecula1 / ATCC 700964).